A 196-amino-acid chain; its full sequence is Holliday junction branch migration complex subunit RuvA (196 aa).

The tract at residues 1 to 63 is domain I; the sequence is MYDYIKGTLV…DDAHLLFGFH (63 aa). Residues 64–142 are domain II; the sequence is TEDEKEVFLK…ELPAETTNTT (79 aa). Positions 143 to 146 are flexible linker; sequence ANQT. Residues 147 to 196 form a domain III region; that stretch reads AGNQQLDEAMEALLALGYKSTELKKVKAFFEDTNETAEQYIKSALKMLMK.

It belongs to the RuvA family. In terms of assembly, homotetramer. Forms an RuvA(8)-RuvB(12)-Holliday junction (HJ) complex. HJ DNA is sandwiched between 2 RuvA tetramers; dsDNA enters through RuvA and exits via RuvB. An RuvB hexamer assembles on each DNA strand where it exits the tetramer. Each RuvB hexamer is contacted by two RuvA subunits (via domain III) on 2 adjacent RuvB subunits; this complex drives branch migration. In the full resolvosome a probable DNA-RuvA(4)-RuvB(12)-RuvC(2) complex forms which resolves the HJ.

It localises to the cytoplasm. Its function is as follows. The RuvA-RuvB-RuvC complex processes Holliday junction (HJ) DNA during genetic recombination and DNA repair, while the RuvA-RuvB complex plays an important role in the rescue of blocked DNA replication forks via replication fork reversal (RFR). RuvA specifically binds to HJ cruciform DNA, conferring on it an open structure. The RuvB hexamer acts as an ATP-dependent pump, pulling dsDNA into and through the RuvAB complex. HJ branch migration allows RuvC to scan DNA until it finds its consensus sequence, where it cleaves and resolves the cruciform DNA. The sequence is that of Holliday junction branch migration complex subunit RuvA from Streptococcus thermophilus (strain CNRZ 1066).